Reading from the N-terminus, the 469-residue chain is uncharacterized protein (469 aa).

3 helical membrane passes run 42 to 62, 179 to 199, and 249 to 269; these read DVII…AYVI, IVLP…VTPS, and NLKY…GLFV.

Its subcellular location is the cell membrane. This is an uncharacterized protein from Methanocaldococcus jannaschii (strain ATCC 43067 / DSM 2661 / JAL-1 / JCM 10045 / NBRC 100440) (Methanococcus jannaschii).